Reading from the N-terminus, the 500-residue chain is MTQAILALSQIEKAFPGVKALDKASLNVYPGRVMALMGENGAGKSTLMKVLTGIYSKDAGSIEYQGQPVSFKGPRDSQLAGISIIHQELNLIPQLTIAENIFLGREMTSPFGRILWDEMHRKADQLLARLNVKHSAKTLLGELSLGEQQMVEIAKALSFESKVIIMDEPTDALTDTETESLFNVINELREQGCGIVYISHRLKEIFEICDDITVLRDGKFIGECRVCDTNEDGLIEMMVGRKLEEQYPRIAAQQGDISLEVIGLTGSGVHDVSFTLKKGEILGVSGLMGAGRTELMKVIYGALPSERGVINLNGRTVNPVSPQDGLANGIAYISEDRKGDGLVLGLSVKENMSLCALDQLSKGVQIRHADEVIAVDDFIRLFNIKTPSREQIIGNLSGGNQQKVAIAKGLMTKPKVLILDEPTRGVDVGAKKEIYQLINQFKAEGMSIILVSSEMPEVLGMSDRILVMHEGRISGEFMASEADQEKLMACAVGRNPAHAA.

ABC transporter domains lie at 6–242 (LALS…VGRK) and 252–495 (AQQG…VGRN). 38–45 (GENGAGKS) is a binding site for ATP.

It belongs to the ABC transporter superfamily. Ribose importer (TC 3.A.1.2.1) family. As to quaternary structure, the complex is composed of an ATP-binding protein (RbsA), two transmembrane proteins (RbsC) and a solute-binding protein (RbsB).

Its subcellular location is the cell inner membrane. It carries out the reaction D-ribose(out) + ATP + H2O = D-ribose(in) + ADP + phosphate + H(+). In terms of biological role, part of the ABC transporter complex RbsABC involved in ribose import. Responsible for energy coupling to the transport system. The polypeptide is Ribose import ATP-binding protein RbsA (Vibrio cholerae serotype O1 (strain ATCC 39315 / El Tor Inaba N16961)).